A 101-amino-acid chain; its full sequence is MRAYELMVLIDPEVDERTVEPTLKKYLEVVTNAGGTVDNIDVWGRRKTAYEIQKKSEAIYVVVNFQSEPAATQELDRLLNLNETILRTKIIRPEEQKITAE.

The protein belongs to the bacterial ribosomal protein bS6 family.

Its function is as follows. Binds together with bS18 to 16S ribosomal RNA. The polypeptide is Small ribosomal subunit protein bS6 (Micrococcus luteus (strain ATCC 4698 / DSM 20030 / JCM 1464 / CCM 169 / CCUG 5858 / IAM 1056 / NBRC 3333 / NCIMB 9278 / NCTC 2665 / VKM Ac-2230) (Micrococcus lysodeikticus)).